The sequence spans 276 residues: Undecaprenyl-diphosphatase 1 (276 aa).

The next 5 helical transmembrane spans lie at 83–103 (FTLNVVIATIPAIALGLLFEK), 108–128 (VLFSPVPVAFALVVGGAIILW), 187–207 (VATEFSFFLAIPIIFGATLYE), 217–237 (VDSLGLFALGLVAAFVSAFVC), and 252–272 (VFAWYRIAFGLFVLLVGYSGW).

The protein belongs to the UppP family.

The protein resides in the cell inner membrane. It carries out the reaction di-trans,octa-cis-undecaprenyl diphosphate + H2O = di-trans,octa-cis-undecaprenyl phosphate + phosphate + H(+). Its function is as follows. Catalyzes the dephosphorylation of undecaprenyl diphosphate (UPP). Confers resistance to bacitracin. This chain is Undecaprenyl-diphosphatase 1, found in Burkholderia cenocepacia (strain HI2424).